Reading from the N-terminus, the 438-residue chain is ATP phosphoribosyltransferase regulatory subunit (438 aa).

This sequence belongs to the class-II aminoacyl-tRNA synthetase family. HisZ subfamily. Heteromultimer composed of HisG and HisZ subunits.

The protein resides in the cytoplasm. It participates in amino-acid biosynthesis; L-histidine biosynthesis; L-histidine from 5-phospho-alpha-D-ribose 1-diphosphate: step 1/9. Functionally, required for the first step of histidine biosynthesis. May allow the feedback regulation of ATP phosphoribosyltransferase activity by histidine. The protein is ATP phosphoribosyltransferase regulatory subunit of Geobacter sulfurreducens (strain ATCC 51573 / DSM 12127 / PCA).